Reading from the N-terminus, the 117-residue chain is Large ribosomal subunit protein bL20 (117 aa).

The protein belongs to the bacterial ribosomal protein bL20 family.

Its function is as follows. Binds directly to 23S ribosomal RNA and is necessary for the in vitro assembly process of the 50S ribosomal subunit. It is not involved in the protein synthesizing functions of that subunit. This Mannheimia succiniciproducens (strain KCTC 0769BP / MBEL55E) protein is Large ribosomal subunit protein bL20.